Reading from the N-terminus, the 245-residue chain is Superoxide dismutase [Mn], mitochondrial (245 aa).

A mitochondrion-targeting transit peptide spans 1–32; sequence MVNLGSIWQNLLASQAPLQSMTGNATTMAGLA. Mn(2+)-binding residues include histidine 58, histidine 106, aspartate 196, and histidine 200.

Belongs to the iron/manganese superoxide dismutase family. In terms of assembly, homotetramer. The cofactor is Mn(2+).

It localises to the mitochondrion matrix. The enzyme catalyses 2 superoxide + 2 H(+) = H2O2 + O2. Destroys superoxide anion radicals which are normally produced within the cells and which are toxic to biological systems. The protein is Superoxide dismutase [Mn], mitochondrial (sod-2) of Neurospora crassa (strain ATCC 24698 / 74-OR23-1A / CBS 708.71 / DSM 1257 / FGSC 987).